Here is a 170-residue protein sequence, read N- to C-terminus: Acireductone dioxygenase (170 aa).

Positions 99, 101, 105, and 144 each coordinate Fe(2+). Residues His99, His101, Glu105, and His144 each contribute to the Ni(2+) site.

It belongs to the acireductone dioxygenase (ARD) family. Monomer. Fe(2+) is required as a cofactor. It depends on Ni(2+) as a cofactor.

It carries out the reaction 1,2-dihydroxy-5-(methylsulfanyl)pent-1-en-3-one + O2 = 3-(methylsulfanyl)propanoate + CO + formate + 2 H(+). It catalyses the reaction 1,2-dihydroxy-5-(methylsulfanyl)pent-1-en-3-one + O2 = 4-methylsulfanyl-2-oxobutanoate + formate + 2 H(+). Its pathway is amino-acid biosynthesis; L-methionine biosynthesis via salvage pathway; L-methionine from S-methyl-5-thio-alpha-D-ribose 1-phosphate: step 5/6. In terms of biological role, catalyzes 2 different reactions between oxygen and the acireductone 1,2-dihydroxy-3-keto-5-methylthiopentene (DHK-MTPene) depending upon the metal bound in the active site. Fe-containing acireductone dioxygenase (Fe-ARD) produces formate and 2-keto-4-methylthiobutyrate (KMTB), the alpha-ketoacid precursor of methionine in the methionine recycle pathway. Ni-containing acireductone dioxygenase (Ni-ARD) produces methylthiopropionate, carbon monoxide and formate, and does not lie on the methionine recycle pathway. The polypeptide is Acireductone dioxygenase (Bacillus cytotoxicus (strain DSM 22905 / CIP 110041 / 391-98 / NVH 391-98)).